The following is a 667-amino-acid chain: Transketolase (667 aa).

His27 provides a ligand contact to substrate. Thiamine diphosphate is bound by residues His67 and 115-117; that span reads GPL. Asp156 is a Mg(2+) binding site. The thiamine diphosphate site is built by Gly157 and Asn186. Positions 186 and 188 each coordinate Mg(2+). Substrate contacts are provided by His262, Arg357, and Ser384. His262 is a binding site for thiamine diphosphate. Glu411 (proton donor) is an active-site residue. Phe437 serves as a coordination point for thiamine diphosphate. 3 residues coordinate substrate: His461, Asp469, and Arg520.

The protein belongs to the transketolase family. Homodimer. The cofactor is Mg(2+). Ca(2+) is required as a cofactor. Requires Mn(2+) as cofactor. It depends on Co(2+) as a cofactor. Thiamine diphosphate serves as cofactor.

It carries out the reaction D-sedoheptulose 7-phosphate + D-glyceraldehyde 3-phosphate = aldehydo-D-ribose 5-phosphate + D-xylulose 5-phosphate. Catalyzes the transfer of a two-carbon ketol group from a ketose donor to an aldose acceptor, via a covalent intermediate with the cofactor thiamine pyrophosphate. This Bacillus subtilis (strain 168) protein is Transketolase (tkt).